The sequence spans 1178 residues: Mediator of RNA polymerase II transcription subunit 14 (1178 aa).

Residues 1–12 (MDNSVHNNSNTT) are compositionally biased toward polar residues. Disordered stretches follow at residues 1–50 (MDNS…PITV) and 1064–1178 (LAGT…VVLD). 2 stretches are compositionally biased toward low complexity: residues 1074–1112 (PTQI…QGAA) and 1119–1164 (HQLQ…AQQR).

Belongs to the Mediator complex subunit 14 family. In terms of assembly, component of the Mediator complex.

It localises to the nucleus. In terms of biological role, component of the Mediator complex, a coactivator involved in the regulated transcription of nearly all RNA polymerase II-dependent genes. Mediator functions as a bridge to convey information from gene-specific regulatory proteins to the basal RNA polymerase II transcription machinery. Mediator is recruited to promoters by direct interactions with regulatory proteins and serves as a scaffold for the assembly of a functional preinitiation complex with RNA polymerase II and the general transcription factors. In Chaetomium globosum (strain ATCC 6205 / CBS 148.51 / DSM 1962 / NBRC 6347 / NRRL 1970) (Soil fungus), this protein is Mediator of RNA polymerase II transcription subunit 14 (RGR1).